The chain runs to 985 residues: Coiled-coil domain-containing protein 33 (985 aa).

A disordered region spans residues M228 to T263. Residues T263–L398 form the C2 domain. Residues V599–E745 are a coiled coil. The disordered stretch occupies residues A821–Q842. Residues D885–Q928 are a coiled coil. A disordered region spans residues G931 to T985. Composition is skewed to polar residues over residues A946 to S956 and P972 to T985.

This is Coiled-coil domain-containing protein 33 (Ccdc33) from Mus musculus (Mouse).